A 95-amino-acid chain; its full sequence is Synaptobrevin-A (95 aa).

Topologically, residues 1-70 are cytoplasmic; it reads MSEPVNKVKQ…KRLMWCRNIK (70 aa). One can recognise a v-SNARE coiled-coil homology domain in the interval 7–67; the sequence is KVKQTQQQVD…NEIKRLMWCR (61 aa). A helical; Anchor for type IV membrane protein transmembrane segment spans residues 71–91; that stretch reads LTLIIIAVVVLLLVVIIVPIV. Over 92-95 the chain is Vesicular; that stretch reads LKFT.

It belongs to the synaptobrevin family.

The protein resides in the cytoplasmic vesicle. Its subcellular location is the secretory vesicle membrane. In terms of biological role, involved in the targeting and/or fusion of transport vesicles to their target membrane. The sequence is that of Synaptobrevin-A (sybA) from Dictyostelium discoideum (Social amoeba).